The primary structure comprises 74 residues: MDLSVKSEENVEYMVEAIKEKLRMVNAGAMRAASFNEEMYEDLRDIYEHVMKRETFSISEMQAITEELGTLIKK.

This sequence belongs to the UPF0435 family.

This is UPF0435 protein BAA_0470 from Bacillus anthracis (strain A0248).